Reading from the N-terminus, the 300-residue chain is GTPase Era (300 aa).

The Era-type G domain occupies 6–173 (HSGFVAILGR…IESLVNTLPE (168 aa)). The tract at residues 14 to 21 (GRPNVGKS) is G1. 14 to 21 (GRPNVGKS) is a GTP binding site. A G2 region spans residues 40–44 (QTTRN). Residues 61–64 (DTPG) are G3. Residues 61-65 (DTPGI) and 123-126 (NKID) contribute to the GTP site. The tract at residues 123-126 (NKID) is G4. Residues 152–154 (ISA) form a G5 region. The 78-residue stretch at 204–281 (TREEVPHSVA…YLELWVKVQP (78 aa)) folds into the KH type-2 domain.

It belongs to the TRAFAC class TrmE-Era-EngA-EngB-Septin-like GTPase superfamily. Era GTPase family. As to quaternary structure, monomer.

The protein localises to the cytoplasm. Its subcellular location is the cell membrane. Functionally, an essential GTPase that binds both GDP and GTP, with rapid nucleotide exchange. Plays a role in 16S rRNA processing and 30S ribosomal subunit biogenesis and possibly also in cell cycle regulation and energy metabolism. The protein is GTPase Era of Ligilactobacillus salivarius (strain UCC118) (Lactobacillus salivarius).